We begin with the raw amino-acid sequence, 709 residues long: Polyribonucleotide nucleotidyltransferase (709 aa).

Residues D485 and D491 each contribute to the Mg(2+) site. Residues 552 to 611 enclose the KH domain; it reads PRIHTMKIDPKKIKDVIGKGGATIRALTEETGTSIDIDDDGTVKIAATDNNAAKRVMERI. The region spanning 621-689 is the S1 motif domain; the sequence is NAIYKGKVTR…RQGRIRLTMK (69 aa).

This sequence belongs to the polyribonucleotide nucleotidyltransferase family. As to quaternary structure, component of the RNA degradosome, which is a multiprotein complex involved in RNA processing and mRNA degradation. Mg(2+) is required as a cofactor.

The protein localises to the cytoplasm. It carries out the reaction RNA(n+1) + phosphate = RNA(n) + a ribonucleoside 5'-diphosphate. In terms of biological role, involved in mRNA degradation. Catalyzes the phosphorolysis of single-stranded polyribonucleotides processively in the 3'- to 5'-direction. The polypeptide is Polyribonucleotide nucleotidyltransferase (Glaesserella parasuis serovar 5 (strain SH0165) (Haemophilus parasuis)).